Consider the following 245-residue polypeptide: Transcriptional regulatory protein VxrB (245 aa).

One can recognise a Response regulatory domain in the interval 31–142; the sequence is TLLLVEDDKN…ELFARIRAQL (112 aa). Aspartate 78 carries the post-translational modification 4-aspartylphosphate. The segment at residues 151–245 is a DNA-binding region (ompR/PhoB-type); it reads DSKVVTSNLT…LRGVGYKMKA (95 aa).

Post-translationally, phosphorylated by VxrA.

It localises to the cytoplasm. Its function is as follows. Member of the two-component regulatory system VxrB/VxrA involved in the regulation of diverses processes, including virulence, the type VI secretion system (T6SS) and biofilm formation. VxrB positively regulates the expression of the T6SS, a virulence nanomachine that directly translocates effectors into bacterial or host cells, thereby facilitating colonization by competing with sister cells and intestinal microbiota. In addition, it activates vpsL expression and biofilm formation, and represses motility. May regulate biofilm formation via its regulation of key biofilm regulators and cyclic di-GMP levels. Significantly contributes to both attack and defense via T6SS, while also influencing competition via regulation of biofilm matrix production. Is critical for colonization in the infant mouse model. In Vibrio cholerae serotype O1 (strain ATCC 39315 / El Tor Inaba N16961), this protein is Transcriptional regulatory protein VxrB.